We begin with the raw amino-acid sequence, 364 residues long: Methylthioribose-1-phosphate isomerase (364 aa).

Substrate is bound by residues 46–48 (RGA), Arg89, and Gln196. Asp237 serves as the catalytic Proton donor. 247–248 (NK) provides a ligand contact to substrate.

This sequence belongs to the eIF-2B alpha/beta/delta subunits family. MtnA subfamily.

It carries out the reaction 5-(methylsulfanyl)-alpha-D-ribose 1-phosphate = 5-(methylsulfanyl)-D-ribulose 1-phosphate. It functions in the pathway amino-acid biosynthesis; L-methionine biosynthesis via salvage pathway; L-methionine from S-methyl-5-thio-alpha-D-ribose 1-phosphate: step 1/6. Catalyzes the interconversion of methylthioribose-1-phosphate (MTR-1-P) into methylthioribulose-1-phosphate (MTRu-1-P). The polypeptide is Methylthioribose-1-phosphate isomerase (Pelotomaculum thermopropionicum (strain DSM 13744 / JCM 10971 / SI)).